A 382-amino-acid chain; its full sequence is uncharacterized protein (382 aa).

The next 11 membrane-spanning stretches (helical) occupy residues 8 to 28, 45 to 65, 75 to 95, 102 to 122, 131 to 151, 157 to 177, 204 to 224, 231 to 251, 274 to 294, 325 to 345, and 349 to 369; these read VMLLLCGLLLLTLAIAVLNTL, MVSSSYFTGNLVGTLFTGYLI, YLASLIFAAGCVGLGGMVGFW, FIAGIGCAMIWVVVESALMCS, LLAAYMMAYYMGTFLGQLLVS, LLHVLPWVTGMILAGILPLLF, LGVNGCIISGIVLGSLYGLMP, GMANASIGFWMAVLVSAGILG, VVILGSIAMLTQAAMAPALFI, ALLLSYTVGSLLGPSFAAMLM, and SDNLLFIMIASVSFIYLLMLL.

The protein belongs to the major facilitator superfamily. YcaD (TC 2.A.1.26) family.

The protein localises to the cell inner membrane. This is an uncharacterized protein from Salmonella gallinarum (strain 287/91 / NCTC 13346).